The sequence spans 135 residues: Ribosome-binding factor A (135 aa).

This sequence belongs to the RbfA family. Monomer. Binds 30S ribosomal subunits, but not 50S ribosomal subunits or 70S ribosomes.

The protein resides in the cytoplasm. Its function is as follows. One of several proteins that assist in the late maturation steps of the functional core of the 30S ribosomal subunit. Associates with free 30S ribosomal subunits (but not with 30S subunits that are part of 70S ribosomes or polysomes). Required for efficient processing of 16S rRNA. May interact with the 5'-terminal helix region of 16S rRNA. This Bartonella quintana (strain Toulouse) (Rochalimaea quintana) protein is Ribosome-binding factor A.